The following is a 473-amino-acid chain: MKTLYSLRRFYHVETLFNGTLALAGRDQETTGFAWWAGNARLINLSGKLLGAHVAHAGLIVFWAGAMNLFEVAHFVPEKPMYEQGLILLPHLATLGWGVGPGGEVIDTFPYFVSGVLHLISSAVLGFGGIYHALLGPETLEESFPFFGYVWKDRNKMTTILGIHLILLGIGAFLLVFKALYFGGVYDTWAPGGGDVRKITNLTLSPSVIFGYLLKSPFGGEGWIVSVDDLEDIIGGHVWLGSICIFGGIWHILTKPFAWARRALVWSGEAYLSYSLGALSVFGFIACCFVWFNNTAYPSEFYGPTGPEASQAQAFTFLVRDQRLGANVGSAQGPTGLGKYLMRSPTGEVIFGGETMRFWDLRAPWLEPLRGPNGLDLSRLKKDIQPWQERRSAEYMTHAPLGSLNSVGGVATEINAVNYVSPRSWLATSHFVLGFFLFVGHLWHAGRARAAAAGFEKGIDRDLEPVLFMTPLN.

Positions 1–14 (MKTLYSLRRFYHVE) are excised as a propeptide. Thr15 carries the N-acetylthreonine modification. Thr15 is modified (phosphothreonine). The next 5 membrane-spanning stretches (helical) occupy residues 69–93 (LFEV…PHLA), 134–155 (LLGP…KDRN), 178–200 (KALY…RKIT), 255–275 (KPFA…LSYS), and 291–312 (WFNN…ASQA). Glu367 provides a ligand contact to [CaMn4O5] cluster. Residues 447-471 (RARAAAAGFEKGIDRDLEPVLFMTP) traverse the membrane as a helical segment.

This sequence belongs to the PsbB/PsbC family. PsbC subfamily. As to quaternary structure, PSII is composed of 1 copy each of membrane proteins PsbA, PsbB, PsbC, PsbD, PsbE, PsbF, PsbH, PsbI, PsbJ, PsbK, PsbL, PsbM, PsbT, PsbX, PsbY, PsbZ, Psb30/Ycf12, at least 3 peripheral proteins of the oxygen-evolving complex and a large number of cofactors. It forms dimeric complexes. Requires Binds multiple chlorophylls and provides some of the ligands for the Ca-4Mn-5O cluster of the oxygen-evolving complex. It may also provide a ligand for a Cl- that is required for oxygen evolution. PSII binds additional chlorophylls, carotenoids and specific lipids. as cofactor.

It is found in the plastid. The protein resides in the chloroplast thylakoid membrane. One of the components of the core complex of photosystem II (PSII). It binds chlorophyll and helps catalyze the primary light-induced photochemical processes of PSII. PSII is a light-driven water:plastoquinone oxidoreductase, using light energy to abstract electrons from H(2)O, generating O(2) and a proton gradient subsequently used for ATP formation. In Carica papaya (Papaya), this protein is Photosystem II CP43 reaction center protein.